The primary structure comprises 563 residues: Membrane protein insertase YidC (563 aa).

Residues 1 to 21 (MDIKRTILIVALAIVTYVGVL) traverse the membrane as a helical segment. Residues 43–62 (APGIPDTAAGTNGSASADVP) form a disordered region. Transmembrane regions (helical) follow at residues 344 to 364 (LELTVDYGFLWFIAQPIFWLL), 370 to 390 (ILGNWGWSIIVLTMLIKGLFF), 440 to 460 (LGGCLPILVQMPVFLSLYWVL), 471 to 491 (WILWITDLSIKDPFFILPIIM), and 518 to 538 (PIIFTFFFLWFPAGLVLYWVV).

The protein belongs to the OXA1/ALB3/YidC family. Type 1 subfamily. In terms of assembly, interacts with the Sec translocase complex via SecD. Specifically interacts with transmembrane segments of nascent integral membrane proteins during membrane integration.

It is found in the cell inner membrane. Its function is as follows. Required for the insertion and/or proper folding and/or complex formation of integral membrane proteins into the membrane. Involved in integration of membrane proteins that insert both dependently and independently of the Sec translocase complex, as well as at least some lipoproteins. Aids folding of multispanning membrane proteins. The chain is Membrane protein insertase YidC from Pseudomonas savastanoi pv. phaseolicola (strain 1448A / Race 6) (Pseudomonas syringae pv. phaseolicola (strain 1448A / Race 6)).